The following is a 426-amino-acid chain: Protein sum2 (426 aa).

The region spanning 1-80 is the Sm domain; it reads MTEFIGSRIS…VKDLRIEEPA (80 aa). Disordered regions lie at residues 79–100, 204–305, and 348–426; these read PATT…IGSN, GMPS…AKPR, and SCES…ANDQ. Over residues 84 to 93 the composition is skewed to pro residues; that stretch reads SAPPVQPPND. Polar residues predominate over residues 226–237; the sequence is VSASPSLQSMPP. A compositionally biased stretch (low complexity) spans 261 to 278; the sequence is RNSTVTNDRVVNTTVDVS. The span at 279–298 shows a compositional bias: polar residues; that stretch reads QSQTVETSGPSKEVPTTQPD. A DFDF domain is found at 296 to 332; that stretch reads QPDASAAKPRTEFDFQTANQKFQSMKDDLLKGKNDEE. An FFD box motif is present at residues 335 to 351; sequence EFYKPKQSFFDNISCES. Residues 350–371 show a composition bias toward basic and acidic residues; sequence ESKEKGMEAADRRALRDRERSL. Residues 360–380 carry the TFG box motif; sequence DRRALRDRERSLNMETFGVAG. Residues 384–401 are compositionally biased toward basic residues; the sequence is RGRRGRGRGRGGRGRGRG. Polar residues predominate over residues 405-426; that stretch reads NQYNQYRNSNGSQPRAQPANDQ.

Its function is as follows. Required for G2/M phase checkpoint control. In Schizosaccharomyces pombe (strain 972 / ATCC 24843) (Fission yeast), this protein is Protein sum2 (sum2).